The following is a 435-amino-acid chain: Tektin-4 (435 aa).

A compositionally biased stretch (basic and acidic residues) spans 60–69 (DQSERQRHES). Positions 60–96 (DQSERQRHESQQLATETQALAQRTQQDSTRTVGERLQ) are disordered. Residues 70-85 (QQLATETQALAQRTQQ) are compositionally biased toward low complexity. Coiled-coil stretches lie at residues 102-180 (KSEL…LLKR), 310-336 (LHKT…DKEA), and 363-411 (FRLL…TNSL).

Belongs to the tektin family. Microtubule inner protein component of sperm flagellar doublet microtubules. In terms of processing, ubiquitinated, leading to its degradation. Deubiquitinated by USP16, promoting its stability. In terms of tissue distribution, strongly expressed in spermatozoa. Also detected at low levels in pancreas. Expressed in airway epithelial cells.

It is found in the cytoplasm. Its subcellular location is the cytoskeleton. The protein localises to the cilium axoneme. It localises to the flagellum axoneme. Microtubule inner protein (MIP) part of the dynein-decorated doublet microtubules (DMTs) in cilia and flagellar axoneme. Forms filamentous polymers in the walls of ciliary and flagellar microtubules. Contributes to normal sperm motility. The protein is Tektin-4 of Homo sapiens (Human).